Here is a 120-residue protein sequence, read N- to C-terminus: Aspartate 1-decarboxylase (120 aa).

Ser25 serves as the catalytic Schiff-base intermediate with substrate; via pyruvic acid. Pyruvic acid (Ser) is present on Ser25. Thr57 contributes to the substrate binding site. The Proton donor role is filled by Tyr58. A substrate-binding site is contributed by 73 to 75; sequence GAA.

It belongs to the PanD family. In terms of assembly, heterooctamer of four alpha and four beta subunits. The cofactor is pyruvate. In terms of processing, is synthesized initially as an inactive proenzyme, which is activated by self-cleavage at a specific serine bond to produce a beta-subunit with a hydroxyl group at its C-terminus and an alpha-subunit with a pyruvoyl group at its N-terminus.

Its subcellular location is the cytoplasm. It catalyses the reaction L-aspartate + H(+) = beta-alanine + CO2. It participates in cofactor biosynthesis; (R)-pantothenate biosynthesis; beta-alanine from L-aspartate: step 1/1. Catalyzes the pyruvoyl-dependent decarboxylation of aspartate to produce beta-alanine. The polypeptide is Aspartate 1-decarboxylase (Thermus thermophilus (strain ATCC 27634 / DSM 579 / HB8)).